Consider the following 88-residue polypeptide: Long neurotoxin 20 (88 aa).

A signal peptide spans 1–21 (MKTLLLTLVVVTIVCLDLGNS). 5 disulfides stabilise this stretch: Cys-24–Cys-42, Cys-35–Cys-63, Cys-48–Cys-52, Cys-67–Cys-78, and Cys-79–Cys-84.

This sequence belongs to the three-finger toxin family. Long-chain subfamily. Type II alpha-neurotoxin sub-subfamily. As to expression, expressed by the venom gland.

It is found in the secreted. Binds with high affinity to muscular (alpha-1/CHRNA1) and neuronal (alpha-7/CHRNA7) nicotinic acetylcholine receptor (nAChR) and inhibits acetylcholine from binding to the receptor, thereby impairing neuromuscular and neuronal transmission. This chain is Long neurotoxin 20, found in Drysdalia coronoides (White-lipped snake).